The following is a 459-amino-acid chain: Zinc finger protein 213 (459 aa).

The 82-residue stretch at 45 to 126 (RQRFRQFCYG…VALVEDLQKQ (82 aa)) folds into the SCAN box domain. Residues 128–188 (VKAWRQDVPS…ALLKEGRPGE (61 aa)) are disordered. The KRAB domain occupies 202–292 (VALGDIPFYF…ENRPRAALGP (91 aa)). 5 consecutive C2H2-type zinc fingers follow at residues 317-339 (HSCGQCGKRFRWGSDLARHQRTH), 345-367 (HKCPECDKSFRSSSDLVRHQGVH), 373-395 (FSCSECGKSFSRSAYLADHQRIH), 401-423 (FGCSDCGKSFSLRSYLLDHRRVH), and 429-451 (FGCGECDKSFKQRAHLIAHQSLH).

The protein belongs to the krueppel C2H2-type zinc-finger protein family. In terms of tissue distribution, widely expressed with highest levels in testis.

It localises to the nucleus. Its function is as follows. May be involved in transcriptional regulation. The sequence is that of Zinc finger protein 213 (ZNF213) from Homo sapiens (Human).